The chain runs to 472 residues: Aspartyl/glutamyl-tRNA(Asn/Gln) amidotransferase subunit B (472 aa).

The protein belongs to the GatB/GatE family. GatB subfamily. In terms of assembly, heterotrimer of A, B and C subunits.

The enzyme catalyses L-glutamyl-tRNA(Gln) + L-glutamine + ATP + H2O = L-glutaminyl-tRNA(Gln) + L-glutamate + ADP + phosphate + H(+). The catalysed reaction is L-aspartyl-tRNA(Asn) + L-glutamine + ATP + H2O = L-asparaginyl-tRNA(Asn) + L-glutamate + ADP + phosphate + 2 H(+). Its function is as follows. Allows the formation of correctly charged Asn-tRNA(Asn) or Gln-tRNA(Gln) through the transamidation of misacylated Asp-tRNA(Asn) or Glu-tRNA(Gln) in organisms which lack either or both of asparaginyl-tRNA or glutaminyl-tRNA synthetases. The reaction takes place in the presence of glutamine and ATP through an activated phospho-Asp-tRNA(Asn) or phospho-Glu-tRNA(Gln). The polypeptide is Aspartyl/glutamyl-tRNA(Asn/Gln) amidotransferase subunit B (Campylobacter jejuni (strain RM1221)).